A 240-amino-acid chain; its full sequence is DNA repair protein RecO (240 aa).

It belongs to the RecO family.

Functionally, involved in DNA repair and RecF pathway recombination. This is DNA repair protein RecO from Actinobacillus pleuropneumoniae serotype 3 (strain JL03).